The chain runs to 439 residues: Paraneoplastic antigen-like protein 8A (439 aa).

Residues 213–439 (ETPNNWNATE…RRATNESRKV (227 aa)) are disordered. Basic residues predominate over residues 231-249 (LVRRAGAKSRSRRKKQKKN). A compositionally biased stretch (polar residues) spans 403 to 419 (KAPQGQQPAEATASTSR). The segment covering 423 to 439 (AKPEGSPRRATNESRKV) has biased composition (basic and acidic residues).

This sequence belongs to the PNMA family.

This chain is Paraneoplastic antigen-like protein 8A (PNMA8A), found in Pongo abelii (Sumatran orangutan).